Reading from the N-terminus, the 743-residue chain is Threonine synthase-like 1 (743 aa).

K281 carries the N6-acetyllysine modification. K351 carries the post-translational modification N6-(pyridoxal phosphate)lysine.

It belongs to the threonine synthase family. Requires pyridoxal 5'-phosphate as cofactor.

This Macaca fascicularis (Crab-eating macaque) protein is Threonine synthase-like 1 (THNSL1).